A 692-amino-acid polypeptide reads, in one-letter code: Elongation factor G (692 aa).

Residues 8–282 (EKTRNIGIMA…AVVEYMPAPT (275 aa)) form the tr-type G domain. Residues 17–24 (AHIDAGKT), 81–85 (DTPGH), and 135–138 (NKMD) contribute to the GTP site. The interval 285–304 (PNIKGVHPETGEADERHSSD) is disordered. Residues 290–304 (VHPETGEADERHSSD) show a composition bias toward basic and acidic residues.

This sequence belongs to the TRAFAC class translation factor GTPase superfamily. Classic translation factor GTPase family. EF-G/EF-2 subfamily.

It localises to the cytoplasm. Catalyzes the GTP-dependent ribosomal translocation step during translation elongation. During this step, the ribosome changes from the pre-translocational (PRE) to the post-translocational (POST) state as the newly formed A-site-bound peptidyl-tRNA and P-site-bound deacylated tRNA move to the P and E sites, respectively. Catalyzes the coordinated movement of the two tRNA molecules, the mRNA and conformational changes in the ribosome. This Desulfitobacterium hafniense (strain Y51) protein is Elongation factor G.